The following is a 211-amino-acid chain: MNVFARSSVLAAEMIDVFDRTHTEKELVFQSKELCRDFIHSRITREGLSWSKVELDLPEPRGVLVDVSVVLLKLGDELECMRPYVYRNIAKQLNISVSVEAVVSDAFLSVATEVIAMGITWGKVVAIYAVAAGLAVDCVRLGHPVMVHTIVDSLGEFVRRSLVPWLKKRGGWVDILKCVVNMDSRAHVHWLSTAVLTWREFIKTMYVYLTK.

The BH4 signature appears at Lys32–Thr44. Positions Val67–Pro83 match the BH3 motif. Residues Glu113–Ala132 carry the BH1 motif. The BH2 signature appears at Trp165 to Val179. A helical transmembrane segment spans residues Trp190–Thr210.

It belongs to the Bcl-2 family. In terms of tissue distribution, expressed strongly in ovary and more weakly in eye. Little expression in other tissues examined.

It localises to the membrane. Its function is as follows. May play a role in apoptosis. Does not appear to show pro-apoptotic activity when expressed ectopically in early embryos. The chain is Bcl-2-related ovarian killer protein homolog B (bokb) from Danio rerio (Zebrafish).